Here is a 385-residue protein sequence, read N- to C-terminus: tRNA-specific 2-thiouridylase MnmA (385 aa).

Residues 30–37 (GMSGGVDS) and methionine 56 contribute to the ATP site. Residues 118-120 (NPD) are interaction with target base in tRNA. Cysteine 123 (nucleophile) is an active-site residue. The cysteines at positions 123 and 220 are disulfide-linked. Glycine 148 contacts ATP. Positions 170–172 (KDQ) are interaction with tRNA. Cysteine 220 acts as the Cysteine persulfide intermediate in catalysis. An interaction with tRNA region spans residues 332–333 (RY).

Belongs to the MnmA/TRMU family.

It localises to the cytoplasm. The catalysed reaction is S-sulfanyl-L-cysteinyl-[protein] + uridine(34) in tRNA + AH2 + ATP = 2-thiouridine(34) in tRNA + L-cysteinyl-[protein] + A + AMP + diphosphate + H(+). Catalyzes the 2-thiolation of uridine at the wobble position (U34) of tRNA, leading to the formation of s(2)U34. This is tRNA-specific 2-thiouridylase MnmA from Haemophilus influenzae (strain PittGG).